Reading from the N-terminus, the 81-residue chain is Serine protease inhibitor Kazal-type 2 (81 aa).

Residues 1-21 form the signal peptide; sequence MALAVLRLALLLLAVTFAGPL. A Kazal-like domain is found at 27–81; the sequence is KYKTPFCARYQLPGCPRDFNPVCGTDMITYPNECTLCMKIRESGQNIKILRRGPC. 3 disulfides stabilise this stretch: C33–C63, C41–C60, and C49–C81.

As to expression, more abundant in epididymis than in testis.

The protein localises to the secreted. Its subcellular location is the cytoplasmic vesicle. It is found in the secretory vesicle. The protein resides in the acrosome. Strong inhibitor of acrosin in male and/or female genital tract. Also inhibits trypsin. Its function is as follows. As a strong inhibitor of acrosin, it is required for normal spermiogenesis. It probably hinders premature activation of proacrosin and other proteases, thus preventing the cascade of events leading to spermiogenesis defects. May be involved in the regulation of serine protease-dependent germ cell apoptosis. It also inhibits trypsin. The chain is Serine protease inhibitor Kazal-type 2 (SPINK2) from Macaca fascicularis (Crab-eating macaque).